Here is a 610-residue protein sequence, read N- to C-terminus: Elongation factor 4 (610 aa).

Residues 14–196 (NRIRNFSIIA…ALVANIPPPK (183 aa)) enclose the tr-type G domain. GTP contacts are provided by residues 26-31 (DHGKST) and 143-146 (NKID).

The protein belongs to the TRAFAC class translation factor GTPase superfamily. Classic translation factor GTPase family. LepA subfamily.

Its subcellular location is the cell inner membrane. It catalyses the reaction GTP + H2O = GDP + phosphate + H(+). Required for accurate and efficient protein synthesis under certain stress conditions. May act as a fidelity factor of the translation reaction, by catalyzing a one-codon backward translocation of tRNAs on improperly translocated ribosomes. Back-translocation proceeds from a post-translocation (POST) complex to a pre-translocation (PRE) complex, thus giving elongation factor G a second chance to translocate the tRNAs correctly. Binds to ribosomes in a GTP-dependent manner. The polypeptide is Elongation factor 4 (Legionella pneumophila (strain Lens)).